Reading from the N-terminus, the 146-residue chain is uncharacterized protein (146 aa).

In terms of domain architecture, HTH marR-type spans 1-137; the sequence is MLSQEFFNSF…TINVMNQIHE (137 aa).

This is an uncharacterized protein from Staphylococcus aureus (strain MRSA252).